Here is an 865-residue protein sequence, read N- to C-terminus: Nitrogen regulatory protein nrfA (865 aa).

5 disordered regions span residues M1–Q75, R115–I140, F177–R227, G557–S605, and L617–T663. Positions D32–S46 are enriched in low complexity. 2 stretches are compositionally biased toward basic and acidic residues: residues R115–Q126 and P180–A189. The segment covering A582–Q592 has biased composition (polar residues). The GATA-type zinc-finger motif lies at C665–C689. The segment at N713–A854 is disordered. 2 stretches are compositionally biased toward polar residues: residues S715–T724 and I737–L764. Composition is skewed to low complexity over residues P771–A786 and P830–A844.

Its subcellular location is the nucleus. Major nitrogen regulatory protein. The polypeptide is Nitrogen regulatory protein nrfA (nrfA) (Penicillium urticae).